Consider the following 507-residue polypeptide: ATP synthase subunit alpha (507 aa).

ATP is bound at residue 170–177 (GDRQTGKT).

Belongs to the ATPase alpha/beta chains family. F-type ATPases have 2 components, CF(1) - the catalytic core - and CF(0) - the membrane proton channel. CF(1) has five subunits: alpha(3), beta(3), gamma(1), delta(1), epsilon(1). CF(0) has three main subunits: a(1), b(2) and c(9-12). The alpha and beta chains form an alternating ring which encloses part of the gamma chain. CF(1) is attached to CF(0) by a central stalk formed by the gamma and epsilon chains, while a peripheral stalk is formed by the delta and b chains.

It localises to the cell inner membrane. It catalyses the reaction ATP + H2O + 4 H(+)(in) = ADP + phosphate + 5 H(+)(out). Its function is as follows. Produces ATP from ADP in the presence of a proton gradient across the membrane. The alpha chain is a regulatory subunit. This is ATP synthase subunit alpha from Fervidobacterium nodosum (strain ATCC 35602 / DSM 5306 / Rt17-B1).